We begin with the raw amino-acid sequence, 192 residues long: 7-methyl-GTP pyrophosphatase (192 aa).

The active-site Proton acceptor is the Asp-69.

Belongs to the Maf family. YceF subfamily. The cofactor is a divalent metal cation.

The protein localises to the cytoplasm. The enzyme catalyses N(7)-methyl-GTP + H2O = N(7)-methyl-GMP + diphosphate + H(+). Its function is as follows. Nucleoside triphosphate pyrophosphatase that hydrolyzes 7-methyl-GTP (m(7)GTP). May have a dual role in cell division arrest and in preventing the incorporation of modified nucleotides into cellular nucleic acids. This chain is 7-methyl-GTP pyrophosphatase, found in Pseudomonas savastanoi pv. phaseolicola (strain 1448A / Race 6) (Pseudomonas syringae pv. phaseolicola (strain 1448A / Race 6)).